A 144-amino-acid polypeptide reads, in one-letter code: Large ribosomal subunit protein uL16 (144 aa).

The segment covering 1–19 (MLLPKRVKYRRQHRPKTTG) has biased composition (basic residues). The tract at residues 1-23 (MLLPKRVKYRRQHRPKTTGRSKG) is disordered.

It belongs to the universal ribosomal protein uL16 family. Part of the 50S ribosomal subunit.

Its function is as follows. Binds 23S rRNA and is also seen to make contacts with the A and possibly P site tRNAs. In Staphylococcus aureus (strain Mu50 / ATCC 700699), this protein is Large ribosomal subunit protein uL16.